Here is an 82-residue protein sequence, read N- to C-terminus: Small ribosomal subunit protein uS17 (82 aa).

The protein belongs to the universal ribosomal protein uS17 family. Part of the 30S ribosomal subunit.

One of the primary rRNA binding proteins, it binds specifically to the 5'-end of 16S ribosomal RNA. The protein is Small ribosomal subunit protein uS17 of Afipia carboxidovorans (strain ATCC 49405 / DSM 1227 / KCTC 32145 / OM5) (Oligotropha carboxidovorans).